A 453-amino-acid polypeptide reads, in one-letter code: MDRRIFGLENEYGVTCTFRGQRRLSPDEVARYLFRRVVSWGRSSNVFLRNGARLYLDVGSHPEYATPECDNVTELVTHDKAGERILEGLLVDAERRLHEEGIAGDVYLFKNNTDSAGNSYGCHENYLVARHGEFSRLADILIPFLVTRQLLCGAGKVLQTPRGAVYCVSQRAEHIWEGVSSATTRSRPIINTRDEPHADAERYRRLHVIVGDSNMSETTMLLKVGATDLVLRMIEAGTVMRDLTLENPIRAIREVSHDITGRRKVRLASGREASALEVQREYYEKAVDFCERRGIRTGTVEQVLELWGRTLDAIEAEDLDRIGTEIDWVMKYKLIERYRAKHNMTMSHPRVAQIDLAYHDIHRRRGLYYLLEKRGQATRICNDLKIFEGKSVPPQTTRARLRGDFIRRAQEQRRDFTVDWVHLKLNDQAQRTVLCKDPFRSVDDRVEKLIAGM.

Glutamate 9 is a Mg(2+) binding site. ATP is bound at residue arginine 53. Position 55 (tyrosine 55) interacts with Mg(2+). Aspartate 57 serves as the catalytic Proton acceptor. Mg(2+) is bound at residue glutamate 63. Positions 66 and 420 each coordinate ATP.

It belongs to the Pup ligase/Pup deamidase family. Pup-conjugating enzyme subfamily.

It carries out the reaction ATP + [prokaryotic ubiquitin-like protein]-L-glutamate + [protein]-L-lysine = ADP + phosphate + N(6)-([prokaryotic ubiquitin-like protein]-gamma-L-glutamyl)-[protein]-L-lysine.. Its pathway is protein degradation; proteasomal Pup-dependent pathway. It functions in the pathway protein modification; protein pupylation. In terms of biological role, catalyzes the covalent attachment of the prokaryotic ubiquitin-like protein modifier Pup to the proteasomal substrate proteins, thereby targeting them for proteasomal degradation. This tagging system is termed pupylation. The ligation reaction involves the side-chain carboxylate of the C-terminal glutamate of Pup and the side-chain amino group of a substrate lysine. The chain is Pup--protein ligase from Streptomyces avermitilis (strain ATCC 31267 / DSM 46492 / JCM 5070 / NBRC 14893 / NCIMB 12804 / NRRL 8165 / MA-4680).